The following is a 331-amino-acid chain: 5-formaminoimidazole-4-carboxamide-1-(beta)-D-ribofuranosyl 5'-monophosphate synthetase (331 aa).

5-amino-1-(5-phospho-beta-D-ribosyl)imidazole-4-carboxamide-binding residues include H9 and S69. Positions 76–322 constitute an ATP-grasp domain; sequence VELVEKMKVP…IAMELKQGLE (247 aa). ATP is bound by residues 120–179 and E201; that span reads PDDI…VPVY. N229 provides a ligand contact to 5-amino-1-(5-phospho-beta-D-ribosyl)imidazole-4-carboxamide. E267 and E280 together coordinate Mg(2+).

Belongs to the phosphohexose mutase family. It depends on Mg(2+) as a cofactor. The cofactor is Mn(2+).

It catalyses the reaction 5-amino-1-(5-phospho-beta-D-ribosyl)imidazole-4-carboxamide + formate + ATP = 5-formamido-1-(5-phospho-D-ribosyl)imidazole-4-carboxamide + ADP + phosphate. It functions in the pathway purine metabolism; IMP biosynthesis via de novo pathway; 5-formamido-1-(5-phospho-D-ribosyl)imidazole-4-carboxamide from 5-amino-1-(5-phospho-D-ribosyl)imidazole-4-carboxamide (formate route): step 1/1. Functionally, catalyzes the ATP- and formate-dependent formylation of 5-aminoimidazole-4-carboxamide-1-beta-d-ribofuranosyl 5'-monophosphate (AICAR) to 5-formaminoimidazole-4-carboxamide-1-beta-d-ribofuranosyl 5'-monophosphate (FAICAR) in the absence of folates. This is 5-formaminoimidazole-4-carboxamide-1-(beta)-D-ribofuranosyl 5'-monophosphate synthetase from Thermococcus kodakarensis (strain ATCC BAA-918 / JCM 12380 / KOD1) (Pyrococcus kodakaraensis (strain KOD1)).